Here is a 332-residue protein sequence, read N- to C-terminus: Processive diacylglycerol alpha-glucosyltransferase (332 aa).

This sequence belongs to the glycosyltransferase group 1 family. Glycosyltransferase 4 subfamily. The cofactor is Mg(2+).

The protein localises to the cell membrane. It catalyses the reaction a 1,2-diacyl-sn-glycerol + UDP-alpha-D-glucose = a 1,2-diacyl-3-O-(alpha-D-glucopyranosyl)-sn-glycerol + UDP + H(+). It carries out the reaction a 1,2-diacyl-3-O-(alpha-D-glucopyranosyl)-sn-glycerol + UDP-alpha-D-glucose = a 1,2-diacyl-3-O-[alpha-D-glucosyl-(1-&gt; 2)-alpha-D-glucosyl]-sn-glycerol + UDP + H(+). The protein operates within glycolipid metabolism; diglucosyl-diacylglycerol biosynthesis. Activated by the negatively charged lipids phosphatidylglycerol (PG), cardiolipin (CL), nonbilayer-prone 1,3-DAG, 1,2-dioleoylphosphatidylglycerol (DOPG) and 1,2-dioleoylphosphatidylserine (DOPS). Inhibited by 1,2-diacyl-3-O-(alpha-D-galactopyranosyl)-sn-glycerol, 1,2-diacyl-3-O-[6-O-acyl(alpha-D-glucopyranosyl)]-sn-glycerol and 1,2-diacyl-3-O-[alpha-D-glucopyranosyl-(1-&gt;2)-O-(6-O-acyl-alpha-D-glucopyranosyl)]-sn-glycerol. Its function is as follows. Processive glucosyltransferase involved in the biosynthesis of both the non-bilayer-prone alpha-monoglucosyldiacylglycerol and the bilayer-forming membrane lipid alpha-diglucosyldiacylglycerol. These are major components for maintaining the anionic lipid surface charge density, for balancing the bilayer to non-bilayer phase equilibria and for keeping a constant lipid bilayer spontaneous curvature (curvature packing stress). Catalyzes the transfer of a glucosyl residue from UDP-Glc to diacylglycerol (DAG) acceptor to form the corresponding alpha-glucosyl-DAG (1,2-diacyl-3-O-(alpha-D-glucopyranosyl)-sn-glycerol), which then acts as acceptor to give alpha-diglucosyl-DAG product (3-O-(alpha-D-glucopyranosyl-alpha-(1-&gt;2)-D-glucopyranosyl)-1,2-diacyl-sn-glycerol). It can only use UDP-Glc as sugar donor. The chain is Processive diacylglycerol alpha-glucosyltransferase (dgs) from Acholeplasma laidlawii.